A 434-amino-acid polypeptide reads, in one-letter code: MTFEEKRVGHNIINQLPDSLLCEIFFNLPTEEVVKTSLICRRWRYVWQSLPGLDLVINGSKNYDKFDFLERFMFLQRVKLRYVGYGHNCRNMTSMMMNNVIKHKIQHLDVGSNRRYVYDRVEIPPTIYTSCERLVFLKLHRANLPKSPDSVSLPCLKIMDLQKINFVDSLDMEKLVSVCPALETLTMDKMYGAKVSSQSLLSFCLTNNETGYLKTQVVMQTPKLKYLKLNRQFIQRIVINDLSSIVMLNLDDVAYFGETLLSILKLISCVRDLTISFDILQDYRHFSKSKSLPKFHKLSVLSVKDMAVGSWESLLIFLESCQNLKSLVMGFRDYNWGINFSDVPQCVLSSLEFVEVKAREVADMKKLWSYFMENSTVLKKFTLCLDHIEDQRDHVMLSKLFTFPRRSNKCEVVVRLRTFGTYKPMSMFSCADGF.

Residues 10–66 (HNIINQLPDSLLCEIFFNLPTEEVVKTSLICRRWRYVWQSLPGLDLVINGSKNYDKF) enclose the F-box domain. LRR repeat units follow at residues 72-99 (FMFL…MMNN), 114-141 (RRYV…KLHR), 164-189 (INFV…TMDK), 204-231 (CLTN…KLNR), 252-277 (DVAY…TISF), and 306-331 (MAVG…VMGF). An FBD domain is found at 336–385 (WGINFSDVPQCVLSSLEFVEVKAREVADMKKLWSYFMENSTVLKKFTLCL).

This chain is Putative F-box/FBD/LRR-repeat protein At1g16940, found in Arabidopsis thaliana (Mouse-ear cress).